Consider the following 82-residue polypeptide: Small ribosomal subunit protein bS16 (82 aa).

Belongs to the bacterial ribosomal protein bS16 family.

This is Small ribosomal subunit protein bS16 from Elusimicrobium minutum (strain Pei191).